A 620-amino-acid polypeptide reads, in one-letter code: 1-deoxy-D-xylulose-5-phosphate synthase (620 aa).

Thiamine diphosphate-binding positions include histidine 80 and 121–123 (GHS). Mg(2+) is bound at residue aspartate 152. Thiamine diphosphate-binding positions include 153–154 (GA), asparagine 181, tyrosine 288, and glutamate 370. Asparagine 181 is a Mg(2+) binding site.

This sequence belongs to the transketolase family. DXPS subfamily. Homodimer. The cofactor is Mg(2+). Requires thiamine diphosphate as cofactor.

It catalyses the reaction D-glyceraldehyde 3-phosphate + pyruvate + H(+) = 1-deoxy-D-xylulose 5-phosphate + CO2. The protein operates within metabolic intermediate biosynthesis; 1-deoxy-D-xylulose 5-phosphate biosynthesis; 1-deoxy-D-xylulose 5-phosphate from D-glyceraldehyde 3-phosphate and pyruvate: step 1/1. Functionally, catalyzes the acyloin condensation reaction between C atoms 2 and 3 of pyruvate and glyceraldehyde 3-phosphate to yield 1-deoxy-D-xylulose-5-phosphate (DXP). The sequence is that of 1-deoxy-D-xylulose-5-phosphate synthase from Shigella boydii serotype 18 (strain CDC 3083-94 / BS512).